We begin with the raw amino-acid sequence, 178 residues long: ATP synthase subunit delta (178 aa).

The protein belongs to the ATPase delta chain family. As to quaternary structure, F-type ATPases have 2 components, F(1) - the catalytic core - and F(0) - the membrane proton channel. F(1) has five subunits: alpha(3), beta(3), gamma(1), delta(1), epsilon(1). F(0) has three main subunits: a(1), b(2) and c(10-14). The alpha and beta chains form an alternating ring which encloses part of the gamma chain. F(1) is attached to F(0) by a central stalk formed by the gamma and epsilon chains, while a peripheral stalk is formed by the delta and b chains.

It is found in the cell membrane. Functionally, f(1)F(0) ATP synthase produces ATP from ADP in the presence of a proton or sodium gradient. F-type ATPases consist of two structural domains, F(1) containing the extramembraneous catalytic core and F(0) containing the membrane proton channel, linked together by a central stalk and a peripheral stalk. During catalysis, ATP synthesis in the catalytic domain of F(1) is coupled via a rotary mechanism of the central stalk subunits to proton translocation. This protein is part of the stalk that links CF(0) to CF(1). It either transmits conformational changes from CF(0) to CF(1) or is implicated in proton conduction. The chain is ATP synthase subunit delta from Streptococcus pneumoniae (strain CGSP14).